The chain runs to 75 residues: UPF0352 protein VV1166 (75 aa).

The protein belongs to the UPF0352 family.

This is UPF0352 protein VV1166 from Vibrio vulnificus (strain YJ016).